The chain runs to 224 residues: Ribose-5-phosphate isomerase A (224 aa).

Residues 26–29 (TGST), 82–85 (DGAD), and 95–98 (KGGG) each bind substrate. The active-site Proton acceptor is the Glu104. Substrate is bound at residue Lys122.

It belongs to the ribose 5-phosphate isomerase family. In terms of assembly, homodimer.

It catalyses the reaction aldehydo-D-ribose 5-phosphate = D-ribulose 5-phosphate. It participates in carbohydrate degradation; pentose phosphate pathway; D-ribose 5-phosphate from D-ribulose 5-phosphate (non-oxidative stage): step 1/1. In terms of biological role, catalyzes the reversible conversion of ribose-5-phosphate to ribulose 5-phosphate. The sequence is that of Ribose-5-phosphate isomerase A from Lactococcus lactis subsp. cremoris (strain MG1363).